Here is a 224-residue protein sequence, read N- to C-terminus: Ribose-5-phosphate isomerase A (224 aa).

Residues 32–35 (TGST), 85–88 (DGAD), and 98–101 (KGGG) contribute to the substrate site. Residue E107 is the Proton acceptor of the active site. Substrate is bound at residue K125.

It belongs to the ribose 5-phosphate isomerase family. Homodimer.

It catalyses the reaction aldehydo-D-ribose 5-phosphate = D-ribulose 5-phosphate. It participates in carbohydrate degradation; pentose phosphate pathway; D-ribose 5-phosphate from D-ribulose 5-phosphate (non-oxidative stage): step 1/1. Functionally, catalyzes the reversible conversion of ribose-5-phosphate to ribulose 5-phosphate. This Pseudomonas fluorescens (strain Pf0-1) protein is Ribose-5-phosphate isomerase A.